Here is a 208-residue protein sequence, read N- to C-terminus: Transmembrane protein 222 (208 aa).

The interval 1–34 (MAEAEGSSPLLLQPPPPPPRMAEVETPTGAETDM) is disordered. Residues 1–55 (MAEAEGSSPLLLQPPPPPPRMAEVETPTGAETDMKQYHGSGGVVMDVERSRFPYC) lie on the Extracellular side of the membrane. Residues 56–76 (VVWTPIPVLTWFFPIIGHMGI) traverse the membrane as a helical segment. The Cytoplasmic portion of the chain corresponds to 77 to 164 (CTSAGVIRDF…MRYNNSTNWN (88 aa)). A helical membrane pass occupies residues 165–185 (MVTLCCFCLIYGKYVSVGAFV). Lys186 is a topological domain (extracellular). The helical transmembrane segment at 187–207 (TWLPFVLLLGIILTVSLVFNL) threads the bilayer. Position 208 (Arg208) is a topological domain, cytoplasmic.

It localises to the membrane. The protein resides in the cell projection. The protein localises to the dendrite. The chain is Transmembrane protein 222 (Tmem222) from Mus musculus (Mouse).